A 506-amino-acid polypeptide reads, in one-letter code: Acetylcholine receptor subunit gamma (506 aa).

The first 17 residues, 1-17 (MVLTLLLIICLALEVRS), serve as a signal peptide directing secretion. Residues 18–235 (ENEEGRLIEK…IIFFLIIQRK (218 aa)) lie on the Extracellular side of the membrane. The N-linked (GlcNAc...) asparagine glycan is linked to Asn-85. Cys-145 and Cys-159 are oxidised to a cystine. 3 helical membrane-spanning segments follow: residues 236–260 (PLFY…VYFL), 269–287 (CTLS…FLIA), and 303–324 (YLIF…VLNV). Residues 325–466 (SLRTPNTHSL…WVLIGKVIDK (142 aa)) are Cytoplasmic-facing. Residue Tyr-381 is modified to Phosphotyrosine; by Tyr-kinases. The chain crosses the membrane as a helical span at residues 467 to 490 (ACFWIALLLFSIGTLAIFLTGHFN).

It belongs to the ligand-gated ion channel (TC 1.A.9) family. Acetylcholine receptor (TC 1.A.9.1) subfamily. Gamma/CHRNG sub-subfamily. Pentamer of two alpha chains, and one each of the beta, delta, and gamma chains. Seems not to be glycosylated on Asn-158.

The protein resides in the postsynaptic cell membrane. It localises to the cell membrane. It carries out the reaction K(+)(in) = K(+)(out). The enzyme catalyses Na(+)(in) = Na(+)(out). In terms of biological role, after binding acetylcholine, the AChR responds by an extensive change in conformation that affects all subunits and leads to opening of an ion-conducting channel across the plasma membrane. This Tetronarce californica (Pacific electric ray) protein is Acetylcholine receptor subunit gamma (CHRNG).